The sequence spans 748 residues: Catalase-peroxidase 2 (748 aa).

Residues 1 to 24 show a composition bias toward polar residues; the sequence is MSSDTSDSRPPNPDTKTASTSESE. The tract at residues 1–43 is disordered; sequence MSSDTSDSRPPNPDTKTASTSESENPAIPSPKPKSGAPLRNQD. The segment at residues 113–238 is a cross-link (tryptophyl-tyrosyl-methioninium (Trp-Tyr) (with M-264)); it reads WHSAGTYRIH…YGATTMGLIY (126 aa). Catalysis depends on histidine 114, which acts as the Proton acceptor. Residues 238–264 constitute a cross-link (tryptophyl-tyrosyl-methioninium (Tyr-Met) (with W-113)); the sequence is YVNPEGPEGQPDPLAAAHDIRETFGRM. Histidine 279 contacts heme b.

Belongs to the peroxidase family. Peroxidase/catalase subfamily. Homotetramer. It depends on heme b as a cofactor. Post-translationally, formation of the three residue Trp-Tyr-Met cross-link is important for the catalase, but not the peroxidase activity of the enzyme.

It catalyses the reaction H2O2 + AH2 = A + 2 H2O. The catalysed reaction is 2 H2O2 = O2 + 2 H2O. In terms of biological role, bifunctional enzyme with both catalase and broad-spectrum peroxidase activity. May play a role in the intracellular survival of mycobacteria. This chain is Catalase-peroxidase 2, found in Mycolicibacterium smegmatis (strain ATCC 700084 / mc(2)155) (Mycobacterium smegmatis).